The chain runs to 198 residues: Acireductone dioxygenase 2 (198 aa).

The Fe(2+) site is built by H99, H101, E105, and H144. Ni(2+)-binding residues include H99, H101, E105, and H144.

This sequence belongs to the acireductone dioxygenase (ARD) family. Fe(2+) is required as a cofactor. Ni(2+) serves as cofactor. As to expression, ubiquitous.

It is found in the cytoplasm. It localises to the nucleus. The catalysed reaction is 1,2-dihydroxy-5-(methylsulfanyl)pent-1-en-3-one + O2 = 4-methylsulfanyl-2-oxobutanoate + formate + 2 H(+). It catalyses the reaction 1,2-dihydroxy-5-(methylsulfanyl)pent-1-en-3-one + O2 = 3-(methylsulfanyl)propanoate + CO + formate + 2 H(+). Its pathway is amino-acid biosynthesis; L-methionine biosynthesis via salvage pathway; L-methionine from S-methyl-5-thio-alpha-D-ribose 1-phosphate: step 5/6. Functionally, catalyzes 2 different reactions between oxygen and the acireductone 1,2-dihydroxy-3-keto-5-methylthiopentene (DHK-MTPene) depending upon the metal bound in the active site. Fe-containing acireductone dioxygenase (Fe-ARD) produces formate and 2-keto-4-methylthiobutyrate (KMTB), the alpha-ketoacid precursor of methionine in the methionine recycle pathway. Ni-containing acireductone dioxygenase (Ni-ARD) produces methylthiopropionate, carbon monoxide and formate, and does not lie on the methionine recycle pathway. The protein is Acireductone dioxygenase 2 (ARD2) of Oryza sativa subsp. indica (Rice).